A 251-amino-acid polypeptide reads, in one-letter code: MNLNSIPAFDDNYIWVLNDEAGRCLIVDPGDAEPVLNAITANNWQPEAIFLTHHHHDHVGGVKELVEKFPQIVVYGPQETQDKGTTQVVKDGETAFVLGHEFSVIATPGHTLGHICYFSKPYLFCGDTLFSGGCGRLFEGTASQMYQSLNKLSALPDDTLVCCAHEYTLSNMKFALSILPHDLSINDYYRKVKELRAKNQITLPVILKNERQINVFLRTEDIDLINVINEETLLQQPEERFAWLRSKKDRF.

Zn(2+)-binding residues include His-53, His-55, Asp-57, His-58, His-110, Asp-127, and His-165.

The protein belongs to the metallo-beta-lactamase superfamily. Glyoxalase II family. In terms of assembly, monomer. Zn(2+) is required as a cofactor.

It catalyses the reaction an S-(2-hydroxyacyl)glutathione + H2O = a 2-hydroxy carboxylate + glutathione + H(+). Its pathway is secondary metabolite metabolism; methylglyoxal degradation; (R)-lactate from methylglyoxal: step 2/2. Thiolesterase that catalyzes the hydrolysis of S-D-lactoyl-glutathione to form glutathione and D-lactic acid. The protein is Hydroxyacylglutathione hydrolase of Escherichia coli (strain 55989 / EAEC).